The following is a 223-amino-acid chain: Probable Ras-related protein Rab-4A (223 aa).

16–23 (GNAGTGKT) serves as a coordination point for GTP. Positions 38 to 46 (TQHTIGAEF) match the Effector region motif. GTP is bound by residues 64–68 (DTAGQ) and 122–125 (NKKD). Residues Cys-221 and Cys-223 are each lipidated (S-geranylgeranyl cysteine). Cys-223 is subject to Cysteine methyl ester.

Belongs to the small GTPase superfamily. Rab family.

The protein localises to the cell membrane. Its function is as follows. Protein transport. Probably involved in vesicular traffic. The sequence is that of Probable Ras-related protein Rab-4A from Echinococcus multilocularis (Fox tapeworm).